A 334-amino-acid polypeptide reads, in one-letter code: DNA-directed RNA polymerase subunit alpha (334 aa).

Positions 1 to 231 (MQSNTFLTPR…EQLSVFADLK (231 aa)) are alpha N-terminal domain (alpha-NTD). The interval 245 to 334 (IDPVLLRPVD…GKKDTSHAAP (90 aa)) is alpha C-terminal domain (alpha-CTD).

This sequence belongs to the RNA polymerase alpha chain family. Homodimer. The RNAP catalytic core consists of 2 alpha, 1 beta, 1 beta' and 1 omega subunit. When a sigma factor is associated with the core the holoenzyme is formed, which can initiate transcription.

It catalyses the reaction RNA(n) + a ribonucleoside 5'-triphosphate = RNA(n+1) + diphosphate. Its function is as follows. DNA-dependent RNA polymerase catalyzes the transcription of DNA into RNA using the four ribonucleoside triphosphates as substrates. The chain is DNA-directed RNA polymerase subunit alpha from Nitrosospira multiformis (strain ATCC 25196 / NCIMB 11849 / C 71).